A 209-amino-acid chain; its full sequence is Uracil phosphoribosyltransferase (209 aa).

5-phospho-alpha-D-ribose 1-diphosphate is bound by residues Arg-79, Arg-104, and 131 to 139 (DPMLATGHS). Residues Ile-194 and 199–201 (GDA) each bind uracil. Asp-200 contributes to the 5-phospho-alpha-D-ribose 1-diphosphate binding site.

Belongs to the UPRTase family. It depends on Mg(2+) as a cofactor.

The enzyme catalyses UMP + diphosphate = 5-phospho-alpha-D-ribose 1-diphosphate + uracil. Its pathway is pyrimidine metabolism; UMP biosynthesis via salvage pathway; UMP from uracil: step 1/1. With respect to regulation, allosterically activated by GTP. Its function is as follows. Catalyzes the conversion of uracil and 5-phospho-alpha-D-ribose 1-diphosphate (PRPP) to UMP and diphosphate. The polypeptide is Uracil phosphoribosyltransferase (Caulobacter vibrioides (strain ATCC 19089 / CIP 103742 / CB 15) (Caulobacter crescentus)).